Consider the following 1996-residue polypeptide: Non-reducing polyketide synthase atnG (1996 aa).

Residues 9 to 245 are N-terminal acylcarrier protein transacylase (SAT) domain; it reads FLFGDQADAP…AELPAFGAVH (237 aa). The Ketosynthase family 3 (KS3) domain maps to 366–794; it reads SGSVAVIGMS…GGNSCFVLEE (429 aa). Active-site for beta-ketoacyl synthase activity residues include Cys-538, His-673, and His-713. The malonyl-CoA:ACP transacylase (MAT) domain stretch occupies residues 891 to 1150; it reads AFAFTGQGAH…VKYTQAISHC (260 aa). The active-site For acyl/malonyl transferase activity is Ser-982. Positions 1263–1392 are N-terminal hotdog fold; sequence HHLVSQDDNG…CCIRQTDEQD (130 aa). In terms of domain architecture, PKS/mFAS DH spans 1263–1569; sequence HHLVSQDDNG…FRKMPRTTLH (307 aa). The product template (PT) domain stretch occupies residues 1267–1568; sequence SQDDNGKEQS…RFRKMPRTTL (302 aa). The Proton acceptor; for dehydratase activity role is filled by His-1295. Residues 1416–1569 form a C-terminal hotdog fold region; it reads ASGIANRFQG…FRKMPRTTLH (154 aa). Asp-1481 (proton donor; for dehydratase activity) is an active-site residue. A disordered region spans residues 1573–1621; sequence GKAVPPKPAKETSHPSVEATAPATTNGRSSATNAQAEAPAPPVNGSNGH. Residues 1594–1607 are compositionally biased toward polar residues; the sequence is PATTNGRSSATNAQ. Residues 1620–1697 enclose the Carrier domain; it reads GHRKTVESVL…DAQRQLRTLE (78 aa). Ser-1657 is subject to O-(pantetheine 4'-phosphoryl)serine. Positions 1725–1923 are thioesterase (TE) domain; sequence KRECNVVLMQ…ERTFVVWAKK (199 aa).

It functions in the pathway secondary metabolite biosynthesis; terpenoid biosynthesis. Functionally, non-reducing polyketide synthase; part of the gene cluster that mediates the biosynthesis of the meroterpenoids arthripenoids. The pathway begins with the HR-PKS atnH that catalyzes two chain-extension steps to form a reduced triketide, which then primes the SAT domain in the NR-PKS atnG to initiate three more cycles of extension to give a linear hexaketide corresponding to the polyketide part of arthripenoids. The FAD-dependent monooxygenase atnJ then performs an oxidative decarboxylation at C11 of the atnH/atnG product, via an electrophilic aromatic hydroxylation with concomitant ipso-decarboxylation. The membrane-bound polyprenyl transferase atnF then introduces a farnesyl group before the FAD-dependent monooxygenase atnK functions as the first epoxidase on terminal C12'-C13' olefin, followed by a second epoxidation on C7'-C8' catalyzed by atnA. The terpene cyclase/mutase atnI then initiates the sequential tricyclic ring formation through protonation of the terminal epoxide and catalyzes the regioselective and stereoselective 6/6/6-tricyclic ring formation. The cytochrome P450 monooxygenase atnM is responsible for hydroxylating both C1' and C10'. The next steps may involve ketoreduction and acetyl transfer by the ketoreductase atnB and the acetyltransferase atnC, and lead to the production of arthripenoid B, the final biosynthetic product of the atn cluster. The hydroquinone moiety in arthripenoid B is prone to undergo spontaneous oxidation to afford a benzoquinone compound, a key intermediate for generating structure diversity. For instance, addition of a cysteine followed by ring contraction gives arthripenoid A, tautomerization gives the main product arthripenoid C, addition of a molecular of water or amine affords arthripenoid D or E, respectively, and loss of one water forms arthripenoid F. The sequence is that of Non-reducing polyketide synthase atnG from Arthrinium sp.